The sequence spans 120 residues: NAD(P)H-quinone oxidoreductase subunit 3, chloroplastic (120 aa).

3 helical membrane passes run Ile-9 to Gly-29, Tyr-62 to Trp-82, and Val-88 to Leu-108.

The protein belongs to the complex I subunit 3 family. As to quaternary structure, NDH is composed of at least 16 different subunits, 5 of which are encoded in the nucleus.

The protein localises to the plastid. It localises to the chloroplast thylakoid membrane. It catalyses the reaction a plastoquinone + NADH + (n+1) H(+)(in) = a plastoquinol + NAD(+) + n H(+)(out). It carries out the reaction a plastoquinone + NADPH + (n+1) H(+)(in) = a plastoquinol + NADP(+) + n H(+)(out). In terms of biological role, NDH shuttles electrons from NAD(P)H:plastoquinone, via FMN and iron-sulfur (Fe-S) centers, to quinones in the photosynthetic chain and possibly in a chloroplast respiratory chain. The immediate electron acceptor for the enzyme in this species is believed to be plastoquinone. Couples the redox reaction to proton translocation, and thus conserves the redox energy in a proton gradient. The sequence is that of NAD(P)H-quinone oxidoreductase subunit 3, chloroplastic from Trachelium caeruleum (Blue throatwort).